The following is a 266-amino-acid chain: Undecaprenyl-diphosphatase (266 aa).

Transmembrane regions (helical) follow at residues 1 to 21, 39 to 59, 87 to 107, 111 to 131, 149 to 169, 183 to 203, 218 to 238, and 246 to 266; these read MDTFQVIILALIQGLTEFLPI, QGLSFDVAVNTGSLLAVVIYF, WWIILATLPAVFFGFMAKDFI, LRSAEVIAVTTIVFGLLLWWA, ALLIGFAQALALIPGTSRSGA, AAARFSFLMSVPVSLGAAILV, ALTLGTLVSFVAAYLCIHYFL, and MTPFVIYRLILGAVLCGFIFL.

This sequence belongs to the UppP family.

It is found in the cell inner membrane. The catalysed reaction is di-trans,octa-cis-undecaprenyl diphosphate + H2O = di-trans,octa-cis-undecaprenyl phosphate + phosphate + H(+). In terms of biological role, catalyzes the dephosphorylation of undecaprenyl diphosphate (UPP). Confers resistance to bacitracin. This chain is Undecaprenyl-diphosphatase, found in Shewanella putrefaciens (strain CN-32 / ATCC BAA-453).